Consider the following 258-residue polypeptide: MGVERIKAAFENGKKAFIPYVMGGDGGLEILKERMRFLDEAGASIVEIGIPFSDPVADGPTIQRAGKRALDSGVTVKGIFQALIEVRKEVQIPFVLMTYLNPVLAFGKERFIERCLEAGVDGIIVPDLPYEEQDIIAPLLREANIALIPLVTVTSPIERIKKITSESEGFVYAVTVAGVTGVRQNFKDEIHSYLEKVKSHTHLPVVAGFGISTKEHVEEMVTICDGVVVGSKVIELLENEKREEICEFIQATKQKEEA.

Active-site proton acceptor residues include Glu-47 and Asp-58.

It belongs to the TrpA family. Tetramer of two alpha and two beta chains.

It catalyses the reaction (1S,2R)-1-C-(indol-3-yl)glycerol 3-phosphate + L-serine = D-glyceraldehyde 3-phosphate + L-tryptophan + H2O. Its pathway is amino-acid biosynthesis; L-tryptophan biosynthesis; L-tryptophan from chorismate: step 5/5. Its function is as follows. The alpha subunit is responsible for the aldol cleavage of indoleglycerol phosphate to indole and glyceraldehyde 3-phosphate. The chain is Tryptophan synthase alpha chain from Bacillus cereus (strain AH820).